We begin with the raw amino-acid sequence, 579 residues long: MDENGTVKPGYELKGLNSGNSRSNMDKDPIVSKFHRAGLNDSADEEDTDINGNRNTSWITSMISEEKRKVEGKSMLNDEEDLHLSKATLNKCDALVKILADIIKLEFVIHQSWYIRSLHKSVLIQFEVETSGGNKNSAGDSGDDDDDNHNGNLDDSFYKDLSLKCIKKCEKSSLALESLSRDIDQIRDFIMSNTIEDNRVDRLLQNSMTLLLECWIYSMKRLRRLRMKIAGIFVRSKLLLIDHELVTIWHFLQEQNEHETVNNENELKLAETIKSYRAFIKIFIQQLEDSESGSPSSSLFEECLHVFLDIESMYNSLNLNWLLNENKALQERLLSPSSTSENDHTNNLPVIDETKEIEDISSFVNSIVDASMLTHDLTPINSSDSDNLSNGEIDRLDGRRLSSSTSDMSLMMQRTSLQKQLPSLLTAFNNARRLEQELQNACKVNDNKHSTKDTDSNIRRNEHAMSSSVSSIISQNSTLASPSPPMSSSFISTAPSQSSSRMSTLPLSPSSSLLESQSQTLKNNMSQWLNQSRSGLNGTKLIPTNHIGFHSNVLNTLYGIGGGPVSKSYKSNQPSSQNT.

Residues Met1–Lys27 are disordered. Ser42 bears the Phosphoserine mark. 2 disordered regions span residues Thr378 to Leu401 and Asp446 to Ser518. Polar residues predominate over residues Pro379–Asn390. The span at Asp446–His463 shows a compositional bias: basic and acidic residues. Over residues Pro495 to Ser518 the composition is skewed to low complexity.

Its function is as follows. Involved in mitochondrial distribution and morphology. This Saccharomyces cerevisiae (strain ATCC 204508 / S288c) (Baker's yeast) protein is Mitochondrial distribution and morphology protein 36 (MDM36).